Consider the following 273-residue polypeptide: Putative phosphoenolpyruvate synthase regulatory protein (273 aa).

153–160 (AVSRAGKT) serves as a coordination point for ADP.

It belongs to the pyruvate, phosphate/water dikinase regulatory protein family. PSRP subfamily.

The enzyme catalyses [pyruvate, water dikinase] + ADP = [pyruvate, water dikinase]-phosphate + AMP + H(+). It catalyses the reaction [pyruvate, water dikinase]-phosphate + phosphate + H(+) = [pyruvate, water dikinase] + diphosphate. Functionally, bifunctional serine/threonine kinase and phosphorylase involved in the regulation of the phosphoenolpyruvate synthase (PEPS) by catalyzing its phosphorylation/dephosphorylation. This chain is Putative phosphoenolpyruvate synthase regulatory protein, found in Xanthomonas oryzae pv. oryzae (strain MAFF 311018).